The sequence spans 861 residues: Leucine--tRNA ligase (861 aa).

The short motif at 42-52 (PYPSGRIHMGH) is the 'HIGH' region element. The 'KMSKS' region motif lies at 623-627 (KMSKS). K626 is a binding site for ATP.

This sequence belongs to the class-I aminoacyl-tRNA synthetase family.

It is found in the cytoplasm. It catalyses the reaction tRNA(Leu) + L-leucine + ATP = L-leucyl-tRNA(Leu) + AMP + diphosphate. The sequence is that of Leucine--tRNA ligase from Caulobacter sp. (strain K31).